The primary structure comprises 106 residues: Guanylate cyclase activator 2B (106 aa).

A signal peptide spans 1–21 (MSRSQLWAAVVLLLLLQSAQG). The propeptide occupies 22 to 91 (VYIKYHGFQV…STFKALRTIA (70 aa)). Cystine bridges form between cysteine 62–cysteine 75, cysteine 95–cysteine 103, and cysteine 98–cysteine 106.

This sequence belongs to the guanylin family. Localized predominantly in intestinal villi and the corticomedullary junction of the kidney.

The protein localises to the secreted. Functionally, endogenous activator of intestinal guanylate cyclase. It stimulates this enzyme through the same receptor binding region as the heat-stable enterotoxins. May be a potent physiological regulator of intestinal fluid and electrolyte transport. May be an autocrine/paracrine regulator of intestinal salt and water transport. This chain is Guanylate cyclase activator 2B (Guca2b), found in Mus musculus (Mouse).